The primary structure comprises 359 residues: UPF0283 membrane protein RHE_CH02332 (359 aa).

The interval Met1–Asp61 is disordered. A run of 2 helical transmembrane segments spans residues Phe77–Thr97 and Leu111–Ile131.

This sequence belongs to the UPF0283 family.

The protein resides in the cell inner membrane. In Rhizobium etli (strain ATCC 51251 / DSM 11541 / JCM 21823 / NBRC 15573 / CFN 42), this protein is UPF0283 membrane protein RHE_CH02332.